The primary structure comprises 472 residues: Glycosyl hydrolase family 109 protein (472 aa).

Residues methionine 1–alanine 35 constitute a signal peptide (tat-type signal). NAD(+) is bound by residues asparagine 68–arginine 69, aspartate 90, tryptophan 139–histidine 142, histidine 145, glutamate 159–leucine 160, and asparagine 188. Residues tyrosine 217, arginine 236, tyrosine 248–histidine 251, and tyrosine 330 each bind substrate. Position 248 (tyrosine 248) interacts with NAD(+).

Belongs to the Gfo/Idh/MocA family. Glycosyl hydrolase 109 subfamily. NAD(+) serves as cofactor. Post-translationally, predicted to be exported by the Tat system. The position of the signal peptide cleavage has not been experimentally proven.

In terms of biological role, glycosidase. Has no alpha-N-acetylgalactosaminidase activity. In Streptomyces coelicolor (strain ATCC BAA-471 / A3(2) / M145), this protein is Glycosyl hydrolase family 109 protein.